The chain runs to 162 residues: Peptidyl-prolyl cis-trans isomerase (162 aa).

Serine 2 is modified (N-acetylserine). Residues 5–161 (YFDVEADGQP…ARIVVAKSGE (157 aa)) enclose the PPIase cyclophilin-type domain. Residues lysine 29 and lysine 42 each participate in a glycyl lysine isopeptide (Lys-Gly) (interchain with G-Cter in ubiquitin) cross-link. A Phosphothreonine modification is found at threonine 71. Residues lysine 123 and lysine 139 each participate in a glycyl lysine isopeptide (Lys-Gly) (interchain with G-Cter in ubiquitin) cross-link. Phosphoserine occurs at positions 142 and 145. Residues lysine 151 and lysine 158 each participate in a glycyl lysine isopeptide (Lys-Gly) (interchain with G-Cter in ubiquitin) cross-link.

It belongs to the cyclophilin-type PPIase family. PPIase A subfamily. In terms of assembly, interacts with a complex composed of SIN3 and RPD3. Identified in the Set3C complex with HOS2, HST1, SNT1, SIF2, HOS4/YIL112W and SET3.

It localises to the cytoplasm. The protein resides in the nucleus. Its subcellular location is the mitochondrion intermembrane space. The enzyme catalyses [protein]-peptidylproline (omega=180) = [protein]-peptidylproline (omega=0). Binds cyclosporin A (CsA). CsA mediates some of its effects via an inhibitory action on PPIase. PPIases accelerate the folding of proteins. It catalyzes the cis-trans isomerization of proline imidic peptide bonds in oligopeptides. Involved in histone deacetylase complexes, suggesting a function in chromatin. Imports fructose-1,6-bisphosphatase (FBPase) into the intermediate vacuole import and degradation (Vid) vesicles. Regulates the meiotic gene program via the Set3C histone deacetylase complex to promote efficient sporulation, and the prolyl-isomerase activity is required for this function. The protein is Peptidyl-prolyl cis-trans isomerase (CPR1) of Saccharomyces cerevisiae (strain ATCC 204508 / S288c) (Baker's yeast).